Consider the following 254-residue polypeptide: Ribonuclease HII (254 aa).

The RNase H type-2 domain maps to 46 to 234 (KLIAGIDEVG…VWMASAPQEV (189 aa)). A divalent metal cation is bound by residues D52, E53, and D144.

The protein belongs to the RNase HII family. It depends on Mn(2+) as a cofactor. Mg(2+) is required as a cofactor.

It is found in the cytoplasm. The enzyme catalyses Endonucleolytic cleavage to 5'-phosphomonoester.. Its function is as follows. Endonuclease that specifically degrades the RNA of RNA-DNA hybrids. The chain is Ribonuclease HII from Koribacter versatilis (strain Ellin345).